A 68-amino-acid polypeptide reads, in one-letter code: uncharacterized protein (68 aa).

The region spanning 2–67 (KTITLNIKGI…VIEDAGFDAT (66 aa)) is the HMA domain. A metal cation-binding residues include cysteine 13 and cysteine 16.

This is an uncharacterized protein from Haemophilus influenzae (strain ATCC 51907 / DSM 11121 / KW20 / Rd).